A 200-amino-acid polypeptide reads, in one-letter code: Small ribosomal subunit protein eS1 (200 aa).

Belongs to the eukaryotic ribosomal protein eS1 family.

The sequence is that of Small ribosomal subunit protein eS1 from Thermococcus sibiricus (strain DSM 12597 / MM 739).